A 91-amino-acid chain; its full sequence is Small ribosomal subunit protein uS15 (91 aa).

This sequence belongs to the universal ribosomal protein uS15 family. Part of the 30S ribosomal subunit. Forms a bridge to the 50S subunit in the 70S ribosome, contacting the 23S rRNA.

In terms of biological role, one of the primary rRNA binding proteins, it binds directly to 16S rRNA where it helps nucleate assembly of the platform of the 30S subunit by binding and bridging several RNA helices of the 16S rRNA. Forms an intersubunit bridge (bridge B4) with the 23S rRNA of the 50S subunit in the ribosome. This chain is Small ribosomal subunit protein uS15, found in Nautilia profundicola (strain ATCC BAA-1463 / DSM 18972 / AmH).